We begin with the raw amino-acid sequence, 60 residues long: Small ribosomal subunit protein eS17 (60 aa).

It belongs to the eukaryotic ribosomal protein eS17 family.

This is Small ribosomal subunit protein eS17 from Methanosphaera stadtmanae (strain ATCC 43021 / DSM 3091 / JCM 11832 / MCB-3).